We begin with the raw amino-acid sequence, 270 residues long: Small ribosomal subunit protein eS1 (270 aa).

Residues 235 to 270 (GTSKGGAASTAAVAKGEEGVKVDRPEGYEPPVLETV) are disordered. Low complexity predominate over residues 239–248 (GGAASTAAVA). Residues 249-261 (KGEEGVKVDRPEG) show a composition bias toward basic and acidic residues.

It belongs to the eukaryotic ribosomal protein eS1 family. In terms of assembly, component of the small ribosomal subunit. Mature ribosomes consist of a small (40S) and a large (60S) subunit. The 40S subunit contains about 33 different proteins and 1 molecule of RNA (18S). The 60S subunit contains about 49 different proteins and 3 molecules of RNA (28S, 5.8S and 5S).

Its subcellular location is the cytoplasm. This chain is Small ribosomal subunit protein eS1, found in Ixodes scapularis (Black-legged tick).